Consider the following 60-residue polypeptide: Large ribosomal subunit protein uL30 (60 aa).

It belongs to the universal ribosomal protein uL30 family. As to quaternary structure, part of the 50S ribosomal subunit.

The sequence is that of Large ribosomal subunit protein uL30 from Streptococcus equi subsp. equi (strain 4047).